Reading from the N-terminus, the 239-residue chain is Small ribosomal subunit protein eS6B (239 aa).

Residues Ser148, Ser235, and Ser236 each carry the phosphoserine modification.

This sequence belongs to the eukaryotic ribosomal protein eS6 family. In terms of assembly, component of the small ribosomal subunit (SSU). Mature yeast ribosomes consist of a small (40S) and a large (60S) subunit. The 40S small subunit contains 1 molecule of ribosomal RNA (18S rRNA) and at least 33 different proteins. The large 60S subunit contains 3 rRNA molecules (25S, 5.8S and 5S rRNA) and at least 46 different proteins. Interacts with snoRNA U3. uS11 interacts with MPP10. Component of the ribosomal small subunit (SSU) processome composed of at least 40 protein subunits and snoRNA U3.

The protein resides in the cytoplasm. Component of the ribosome, a large ribonucleoprotein complex responsible for the synthesis of proteins in the cell. The small ribosomal subunit (SSU) binds messenger RNAs (mRNAs) and translates the encoded message by selecting cognate aminoacyl-transfer RNA (tRNA) molecules. The large subunit (LSU) contains the ribosomal catalytic site termed the peptidyl transferase center (PTC), which catalyzes the formation of peptide bonds, thereby polymerizing the amino acids delivered by tRNAs into a polypeptide chain. The nascent polypeptides leave the ribosome through a tunnel in the LSU and interact with protein factors that function in enzymatic processing, targeting, and the membrane insertion of nascent chains at the exit of the ribosomal tunnel. eS6 is involved in nucleolar processing of pre-18S ribosomal RNA and ribosome assembly. The polypeptide is Small ribosomal subunit protein eS6B (rps602) (Schizosaccharomyces pombe (strain 972 / ATCC 24843) (Fission yeast)).